The following is a 354-amino-acid chain: Tetraacyldisaccharide 4'-kinase (354 aa).

ATP is bound at residue 53 to 60 (AWGGTGKT).

The protein belongs to the LpxK family.

It carries out the reaction a lipid A disaccharide + ATP = a lipid IVA + ADP + H(+). It participates in glycolipid biosynthesis; lipid IV(A) biosynthesis; lipid IV(A) from (3R)-3-hydroxytetradecanoyl-[acyl-carrier-protein] and UDP-N-acetyl-alpha-D-glucosamine: step 6/6. Its function is as follows. Transfers the gamma-phosphate of ATP to the 4'-position of a tetraacyldisaccharide 1-phosphate intermediate (termed DS-1-P) to form tetraacyldisaccharide 1,4'-bis-phosphate (lipid IVA). This chain is Tetraacyldisaccharide 4'-kinase, found in Nitratidesulfovibrio vulgaris (strain ATCC 29579 / DSM 644 / CCUG 34227 / NCIMB 8303 / VKM B-1760 / Hildenborough) (Desulfovibrio vulgaris).